The following is a 168-amino-acid chain: G/U mismatch-specific DNA glycosylase (168 aa).

The protein belongs to the uracil-DNA glycosylase (UDG) superfamily. TDG/mug family. As to quaternary structure, binds DNA as a monomer.

The protein resides in the cytoplasm. It catalyses the reaction Specifically hydrolyzes mismatched double-stranded DNA and polynucleotides, releasing free uracil.. Its function is as follows. Excises ethenocytosine and uracil, which can arise by alkylation or deamination of cytosine, respectively, from the corresponding mispairs with guanine in ds-DNA. It is capable of hydrolyzing the carbon-nitrogen bond between the sugar-phosphate backbone of the DNA and the mispaired base. The complementary strand guanine functions in substrate recognition. Required for DNA damage lesion repair in stationary-phase cells. The sequence is that of G/U mismatch-specific DNA glycosylase from Salmonella choleraesuis (strain SC-B67).